Here is a 1146-residue protein sequence, read N- to C-terminus: Myosin heavy chain kinase A (1146 aa).

The tract at residues 1–25 (MFNIKKRKESITGIPPINVNSPQSV) is disordered. A coiled-coil region spans residues 100–120 (EQMEDQLEKTMKVVRNHTDSL). The disordered stretch occupies residues 158–191 (IQEKKSTSSPLVKGGISGGGGSGGDDSFDGANIS). Positions 172–181 (GISGGGGSGG) are enriched in gly residues. Coiled coils occupy residues 187 to 241 (GANI…KRIE) and 297 to 502 (SKIE…ASIS). The segment at 500–551 (SISPISSVPKSPITTKRSSIILNSPPMTSQQSSPKIQDLLSSSGSSSVSGIN) is pseudosubstrate/autoinhibitory domain. Residues 521–534 (LNSPPMTSQQSSPK) are compositionally biased toward polar residues. The disordered stretch occupies residues 521–540 (LNSPPMTSQQSSPKIQDLLS). The tract at residues 552 to 852 (ISSETGEMGI…KVGAKQLPKA (301 aa)) is catalytic. Residues 564-808 (EFDPIINKWI…VCALLDLDVK (245 aa)) enclose the Alpha-type protein kinase domain. ATP is bound at residue 778-783 (GLGNLG). WD repeat units lie at residues 867 to 897 (SFRE…RVFD), 910 to 938 (GHRK…KVHI), 952 to 980 (GHTG…KVWD), 993 to 1021 (VHTK…YVWD), 1033 to 1061 (GHED…KIWD), 1073 to 1101 (GHWN…KVWD), and 1114 to 1142 (SHSL…KVWE).

The protein belongs to the protein kinase superfamily. Alpha-type protein kinase family. ALPK subfamily. In terms of assembly, oligomer. Mg(2+) is required as a cofactor. Requires Mn(2+) as cofactor. Post-translationally, the N-terminus is blocked.

The catalysed reaction is L-threonyl-[myosin heavy-chain] + ATP = O-phospho-L-threonyl-[myosin heavy-chain] + ADP + H(+). Catalyzes its autophosphorylation, which is needed for enzymatic activity and phosphorylates myosin II heavy chain at a threonine in the C-terminal tail region. This phosphorylation is critical for regulating the assembly and disassembly of myosin II filament, affecting myosin localization during an array of cellular contractile events, including cytokinesis and capping of cell surface receptors as well as chemotactic cell locomotion. In Dictyostelium discoideum (Social amoeba), this protein is Myosin heavy chain kinase A (mhkA).